The chain runs to 338 residues: Glyceraldehyde-3-phosphate dehydrogenase (338 aa).

Residues 12–13, Asp-34, and Arg-79 contribute to the NAD(+) site; that span reads RI. Residues 150–152, Thr-181, 210–211, and Arg-233 each bind D-glyceraldehyde 3-phosphate; these read SCT and TG. The active-site Nucleophile is Cys-151. Residue Asn-316 participates in NAD(+) binding.

Belongs to the glyceraldehyde-3-phosphate dehydrogenase family. Homotetramer.

It localises to the cytoplasm. The catalysed reaction is D-glyceraldehyde 3-phosphate + phosphate + NAD(+) = (2R)-3-phospho-glyceroyl phosphate + NADH + H(+). It participates in carbohydrate degradation; glycolysis; pyruvate from D-glyceraldehyde 3-phosphate: step 1/5. In Phaffia rhodozyma (Yeast), this protein is Glyceraldehyde-3-phosphate dehydrogenase (GPD).